Reading from the N-terminus, the 180-residue chain is V-type proton ATPase subunit c''1 (180 aa).

The Lumenal portion of the chain corresponds to 1-26 (MSGVVALGHASSWGAALVRISPYTFS). The chain crosses the membrane as a helical span at residues 27-47 (AIGIAISIGVSVLGAAWGIYI). At 48 to 66 (TGSSLIGAAIEAPRITSKN) the chain is on the cytoplasmic side. The chain crosses the membrane as a helical span at residues 67-87 (LISVIFCEAVAIYGVIVAIIL). The Lumenal segment spans residues 88-110 (QTKLESVPSSKMYDAESLRAGYA). The chain crosses the membrane as a helical span at residues 111–131 (IFASGIIVGFANLVCGLCVGI). Over 132 to 149 (IGSSCALSDAQNSTLFVK) the chain is Cytoplasmic. A helical transmembrane segment spans residues 150–170 (ILVIEIFGSALGLFGVIVGII). Over 171-180 (MSAQATWPTK) the chain is Lumenal.

The protein belongs to the V-ATPase proteolipid subunit family. V-ATPase is a heteromultimeric enzyme composed of a peripheral catalytic V1 complex (components A to H) attached to an integral membrane V0 proton pore complex (components: a, c, c'', d and e). The proteolipid components c and c'' are present as a hexameric ring that forms the proton-conducting pore. In terms of tissue distribution, preferentially expressed in roots.

Its subcellular location is the endoplasmic reticulum membrane. The protein localises to the golgi apparatus membrane. In terms of biological role, proton-conducting pore forming subunit of the membrane integral V0 complex of vacuolar ATPase. V-ATPase is responsible for acidifying a variety of intracellular compartments in eukaryotic cells. The polypeptide is V-type proton ATPase subunit c''1 (VHA-c''1) (Arabidopsis thaliana (Mouse-ear cress)).